We begin with the raw amino-acid sequence, 280 residues long: Transmembrane protein 119 (280 aa).

An N-terminal signal peptide occupies residues 1-20; that stretch reads MVPWFLLSLLLLARPVPGVA. At 21 to 91 the chain is on the extracellular side; that stretch reads YSVSLPASFL…IMDFFRQYVM (71 aa). A glycan (O-linked (Xyl...) (chondroitin sulfate) serine) is linked at Ser-36. Positions 38-47 are enriched in low complexity; it reads EAEGSSASSP. Residues 38 to 73 are disordered; the sequence is EAEGSSASSPSLPPPGTPAFSPTPERPQPTALDGPV. A helical transmembrane segment spans residues 92–112; that stretch reads LIAVVGSLTFLIMFIVCAALI. Topologically, residues 113 to 280 are cytoplasmic; the sequence is TRQKHKATAY…CACNRVSPSV (168 aa). Disordered stretches follow at residues 133–162 and 181–280; these read VDQRDRAGGPRTFSEVPDRAPDSRHEEGLD and PARA…SPSV. Over residues 148-162 the composition is skewed to basic and acidic residues; sequence VPDRAPDSRHEEGLD. Phosphoserine is present on Ser-269.

Interacts with SMAD1, SMAD5 and RUNX2. In terms of tissue distribution, expressed in spermatocytes and spermatids in the developing testis (at protein level). Expressed in the brain, heart, lung, spleen, skeletal muscle, ovary, testis and epididymis. Predominantly expressed in osteoblasts.

It is found in the cell membrane. Its subcellular location is the cytoplasm. The protein localises to the endoplasmic reticulum membrane. The protein resides in the secreted. In terms of biological role, plays an important role in bone formation and normal bone mineralization. Promotes the differentiation of myoblasts into osteoblasts. May induce the commitment and differentiation of myoblasts into osteoblasts through an enhancement of BMP2 production and interaction with the BMP-RUNX2 pathway. Up-regulates the expression of ATF4 which plays a central role in osteoblast differentiation. Essential for normal spermatogenesis and late testicular differentiation. The polypeptide is Transmembrane protein 119 (Tmem119) (Mus musculus (Mouse)).